Reading from the N-terminus, the 746-residue chain is Histone-lysine N-methyltransferase EZH2 (746 aa).

Residues 1–340 (MGQTGKKSEK…AKEFAAALTA (340 aa)) are interaction with DNMT1, DNMT3A and DNMT3B. Residue S21 is modified to Phosphoserine; by PKB/AKT1. The segment at 39 to 68 (KSMFSSNRQKILERTEILNQEWKQRRIQPV) is interaction with EED. A glycan (O-linked (GlcNAc) serine) is linked at S75. S76 carries the post-translational modification Phosphoserine. Positions 180 to 222 (QYNDDDDDDDGDDPEEREEKQKDLEDHRDDKESRPPRKFPSDK) are disordered. The span at 182–195 (NDDDDDDDGDDPEE) shows a compositional bias: acidic residues. Basic and acidic residues predominate over residues 196 to 222 (REEKQKDLEDHRDDKESRPPRKFPSDK). The interval 329–522 (EGAKEFAAAL…SSNHVYNYQP (194 aa)) is interaction with CDYL. Position 339 is a phosphothreonine (T339). The disordered stretch occupies residues 340-426 (AERIKTPPKR…PIKMKPNIEP (87 aa)). T345 carries the post-translational modification Phosphothreonine; by CDK1 and CDK2. Basic residues predominate over residues 345 to 357 (TPPKRPGGRRRGR). A phosphoserine mark is found at S363 and S366. Position 367 is a phosphothreonine (T367). Residues 374-385 (ESKDTDSDREAG) show a composition bias toward basic and acidic residues. At T487 the chain carries Phosphothreonine. The CXC domain occupies 503–605 (CRKIQLKKDG…SKNVSCKNCS (103 aa)). One can recognise an SET domain in the interval 612–727 (KHLLLAPSDV…TGEELFFDYR (116 aa)). A Glycyl lysine isopeptide (Lys-Gly) (interchain with G-Cter in SUMO2) cross-link involves residue K634.

The protein belongs to the class V-like SAM-binding methyltransferase superfamily. Histone-lysine methyltransferase family. EZ subfamily. Component of the PRC2/EED-EZH2 complex, which includes EED, EZH2, SUZ12, RBBP4 and RBBP7 and possibly AEBP2. The minimum components required for methyltransferase activity of the PRC2/EED-EZH2 complex are EED, EZH2 and SUZ12. The PRC2 complex may also interact with DNMT1, DNMT3A, DNMT3B and PHF1 via the EZH2 subunit and with SIRT1 via the SUZ12 subunit. Interacts with HDAC1 and HDAC2. Binds ATRX via the SET domain. Interacts with PRAME. Interacts with CDYL. Interacts with CLOCK, BMAL1 and CRY1. Interacts with DNMT3L; the interaction is direct. Interacts with EZHIP; the interaction blocks EZH2 methyltransferase activity. Interacts with ZNF263; recruited to the SIX3 promoter along with other proteins involved in chromatin modification and transcriptional corepression where it contributes to transcriptional repression. Interacts with ARMC12. Interacts with ZMYND8; the interaction is dependent on the presence of chromatin. Interacts with DDX18; this interaction inhibits the PRC2 complex. In terms of processing, phosphorylated by AKT1. Phosphorylation by AKT1 reduces methyltransferase activity. Phosphorylation at Thr-345 by CDK1 and CDK2 promotes maintenance of H3K27me3 levels at EZH2-target loci, thus leading to epigenetic gene silencing. Sumoylated. Post-translationally, glycosylated: O-GlcNAcylation at Ser-75 by OGT increases stability of EZH2 and facilitates the formation of H3K27me3 by the PRC2/EED-EZH2 complex. As to expression, in the ovary, expressed in primordial follicles and oocytes and also in external follicle cells (at protein level). Expressed in many tissues. Overexpressed in numerous tumor types including carcinomas of the breast, colon, larynx, lymphoma and testis.

It is found in the nucleus. The enzyme catalyses L-lysyl(27)-[histone H3] + 3 S-adenosyl-L-methionine = N(6),N(6),N(6)-trimethyl-L-lysyl(27)-[histone H3] + 3 S-adenosyl-L-homocysteine + 3 H(+). Functionally, polycomb group (PcG) protein. Catalytic subunit of the PRC2/EED-EZH2 complex, which methylates 'Lys-9' (H3K9me) and 'Lys-27' (H3K27me) of histone H3, leading to transcriptional repression of the affected target gene. Able to mono-, di- and trimethylate 'Lys-27' of histone H3 to form H3K27me1, H3K27me2 and H3K27me3, respectively. Displays a preference for substrates with less methylation, loses activity when progressively more methyl groups are incorporated into H3K27, H3K27me0 &gt; H3K27me1 &gt; H3K27me2. Compared to EZH1-containing complexes, it is more abundant in embryonic stem cells and plays a major role in forming H3K27me3, which is required for embryonic stem cell identity and proper differentiation. The PRC2/EED-EZH2 complex may also serve as a recruiting platform for DNA methyltransferases, thereby linking two epigenetic repression systems. Genes repressed by the PRC2/EED-EZH2 complex include HOXC8, HOXA9, MYT1, CDKN2A and retinoic acid target genes. EZH2 can also methylate non-histone proteins such as the transcription factor GATA4 and the nuclear receptor RORA. Regulates the circadian clock via histone methylation at the promoter of the circadian genes. Essential for the CRY1/2-mediated repression of the transcriptional activation of PER1/2 by the CLOCK-BMAL1 heterodimer; involved in the di and trimethylation of 'Lys-27' of histone H3 on PER1/2 promoters which is necessary for the CRY1/2 proteins to inhibit transcription. This chain is Histone-lysine N-methyltransferase EZH2, found in Homo sapiens (Human).